An 889-amino-acid polypeptide reads, in one-letter code: Inter-alpha-trypsin inhibitor heavy chain H3 (889 aa).

An N-terminal signal peptide occupies residues 1 to 21 (MRTMWWPCLVLALLSGLETSG). Residues 22 to 33 (FPRSPLQLLGKR) constitute a propeptide that is removed on maturation. Residues 29–158 (LLGKRSLPEG…KVTFELTYEE (130 aa)) form the VIT domain. Asparagine 91 is a glycosylation site (N-linked (GlcNAc...) asparagine). In terms of domain architecture, VWFA spans 284–467 (NIVFVIDVSG…LQLQGFYEEV (184 aa)). Residue asparagine 580 is glycosylated (N-linked (GlcNAc...) asparagine). At aspartate 649 the chain carries Aspartate 1-(chondroitin 4-sulfate)-ester. Positions 650-889 (PHFIIQIPGK…HTDYIVPSLF (240 aa)) are excised as a propeptide.

Belongs to the ITIH family. As to quaternary structure, I-alpha-I plasma protease inhibitors are assembled from one or two heavy chains (HC) and one light chain, bikunin. Pre-alpha-inhibitor (P-alpha-I) is composed of ITIH3/HC3 and bikunin. Heavy chains are linked to bikunin via chondroitin 4-sulfate esterified to the alpha-carboxyl of the C-terminal aspartate after propeptide cleavage. As to expression, expressed in both liver and brain.

It localises to the secreted. Its function is as follows. May act as a carrier of hyaluronan in serum or as a binding protein between hyaluronan and other matrix protein, including those on cell surfaces in tissues to regulate the localization, synthesis and degradation of hyaluronan which are essential to cells undergoing biological processes. The protein is Inter-alpha-trypsin inhibitor heavy chain H3 (Itih3) of Mus musculus (Mouse).